We begin with the raw amino-acid sequence, 671 residues long: DNA ligase (671 aa).

Residues 32–36, 81–82, and Glu114 each bind NAD(+); these read DVEYD and SL. Residue Lys116 is the N6-AMP-lysine intermediate of the active site. Positions 137, 175, 292, and 316 each coordinate NAD(+). Residues Cys410, Cys413, Cys428, and Cys434 each coordinate Zn(2+). The BRCT domain maps to 592–671; that stretch reads EKNNYFSGKN…AEFYQILGIR (80 aa).

Belongs to the NAD-dependent DNA ligase family. LigA subfamily. The cofactor is Mg(2+). It depends on Mn(2+) as a cofactor.

The enzyme catalyses NAD(+) + (deoxyribonucleotide)n-3'-hydroxyl + 5'-phospho-(deoxyribonucleotide)m = (deoxyribonucleotide)n+m + AMP + beta-nicotinamide D-nucleotide.. Its function is as follows. DNA ligase that catalyzes the formation of phosphodiester linkages between 5'-phosphoryl and 3'-hydroxyl groups in double-stranded DNA using NAD as a coenzyme and as the energy source for the reaction. It is essential for DNA replication and repair of damaged DNA. This chain is DNA ligase, found in Baumannia cicadellinicola subsp. Homalodisca coagulata.